A 389-amino-acid polypeptide reads, in one-letter code: Indole-3-acetate monooxygenase (389 aa).

It belongs to the HpaH/HsaA monooxygenase family.

The enzyme catalyses (indol-3-yl)acetate + NADH + O2 + H(+) = 2-hydroxy-(1H-indol-3-yl)acetate + NAD(+) + H2O. The catalysed reaction is indole + NADH + O2 + H(+) = indoxyl + NAD(+) + H2O. Functionally, involved in the degradation of the plant hormone indole-3-acetic acid (IAA). Catalyzes the first step of the pathway, the conversion of IAA to 2-hydroxy-IAA (2-OH-IAA). Can also convert indole to indoxyl, which spontaneously dimerizes in the presence of oxygen to form the blue pigment indigo. The chain is Indole-3-acetate monooxygenase from Acinetobacter baumannii (strain ATCC 19606 / DSM 30007 / JCM 6841 / CCUG 19606 / CIP 70.34 / NBRC 109757 / NCIMB 12457 / NCTC 12156 / 81).